Reading from the N-terminus, the 611-residue chain is Leukotriene A-4 hydrolase (611 aa).

K73 bears the N6-acetyllysine mark. A peptide-binding positions include 135 to 137 and 267 to 272; these read QCQ and PYGGME. Residue H296 coordinates Zn(2+). Catalysis depends on E297, which acts as the Proton acceptor. 2 residues coordinate Zn(2+): H300 and E319. Position 337 is an N6-acetyllysine (K337). Y384 functions as the Proton donor in the catalytic mechanism. K414 is modified (N6-acetyllysine). At S416 the chain carries Phosphoserine. An a peptide-binding site is contributed by 564-566; the sequence is RMK. Position 573 is an N6-acetyllysine (K573).

The protein belongs to the peptidase M1 family. As to quaternary structure, monomer. It depends on Zn(2+) as a cofactor. In terms of processing, phosphorylation at Ser-416 inhibits leukotriene-A4 hydrolase activity.

Its subcellular location is the cytoplasm. It carries out the reaction leukotriene A4 + H2O = leukotriene B4. The catalysed reaction is (5S,6S)-epoxy-(18R)-hydroxy-(7E,9E,11Z,14Z,16E)-eicosapentaenoate + H2O = resolvin E1. The enzyme catalyses (5S,6S)-epoxy-(18S)-hydroxy-(7E,9E,11Z,14Z,16E)-eicosapentaenoate + H2O = 18S-resolvin E1. It catalyses the reaction Release of the N-terminal residue from a tripeptide.. The protein operates within lipid metabolism; leukotriene B4 biosynthesis. Inhibited by bestatin. The epoxide hydrolase activity is restrained by suicide inactivation that involves binding of LTA4 to Tyr-379. 4-(4-benzylphenyl)thiazol-2-amine (ARM1) selectively inhibits the epoxide hydrolase activity. Bifunctional zinc metalloenzyme that comprises both epoxide hydrolase (EH) and aminopeptidase activities. Acts as an epoxide hydrolase to catalyze the conversion of LTA4 to the pro-inflammatory mediator leukotriene B4 (LTB4). Also has aminopeptidase activity, with high affinity for N-terminal arginines of various synthetic tripeptides. In addition to its pro-inflammatory EH activity, may also counteract inflammation by its aminopeptidase activity, which inactivates by cleavage another neutrophil attractant, the tripeptide Pro-Gly-Pro (PGP), a bioactive fragment of collagen generated by the action of matrix metalloproteinase-9 (MMP9) and prolylendopeptidase (PREPL). Involved also in the biosynthesis of resolvin E1 and 18S-resolvin E1 from eicosapentaenoic acid, two lipid mediators that show potent anti-inflammatory and pro-resolving actions. The protein is Leukotriene A-4 hydrolase (Lta4h) of Mus musculus (Mouse).